We begin with the raw amino-acid sequence, 255 residues long: Acetylglutamate kinase (255 aa).

Substrate is bound by residues 40 to 41 (GG), Arg62, and Asn153.

Belongs to the acetylglutamate kinase family. ArgB subfamily.

The protein resides in the cytoplasm. The enzyme catalyses N-acetyl-L-glutamate + ATP = N-acetyl-L-glutamyl 5-phosphate + ADP. It functions in the pathway amino-acid biosynthesis; L-arginine biosynthesis; N(2)-acetyl-L-ornithine from L-glutamate: step 2/4. Its function is as follows. Catalyzes the ATP-dependent phosphorylation of N-acetyl-L-glutamate. In Bacillus cereus (strain G9842), this protein is Acetylglutamate kinase.